Here is a 344-residue protein sequence, read N- to C-terminus: Late embryogenesis abundant protein 17 (344 aa).

2 disordered regions span residues methionine 1–alanine 20 and lysine 116–glycine 258. Positions serine 3–arginine 52 form a coiled coil. Composition is skewed to basic and acidic residues over residues lysine 116–valine 163, glutamate 172–lysine 230, and aspartate 238–aspartate 252.

This sequence belongs to the LEA type 4 family. In terms of tissue distribution, expressed in embryos.

The protein resides in the nucleus. Its function is as follows. Involved in abiotic stress responses. May function as chaperone and contribute to prevent the formation of damaging protein aggregates. The protein is Late embryogenesis abundant protein 17 of Oryza sativa subsp. japonica (Rice).